The following is a 213-amino-acid chain: Andrastin A biosynthesis cluster protein B (213 aa).

In terms of biological role, part of the gene cluster that mediates the biosynthesis of andrastins, meroterpenoid compounds that exhibit inhibitory activity against ras farnesyltransferase, suggesting that they could be promising leads for antitumor agents. The first step of the pathway is the synthesis of 3,5-dimethylorsellinic acid (DMOA) by the polyketide synthase adrD via condensation of one acetyl-CoA starter unit with 3 malonyl-CoA units and 2 methylations. DMAO is then converted to farnesyl-DMAO by the prenyltransferase adrG. The methyltransferase adrK catalyzes the methylation of the carboxyl group of farnesyl-DMAO to farnesyl-DMAO methyl ester which is further converted to epoxyfarnesyl-DMAO methyl ester by the FAD-dependent monooxygenase adrH. The terpene cyclase adrI then catalyzes the carbon skeletal rearrangement to generate the andrastin E, the first compound in the pathway having the andrastin scaffold, with the tetracyclic ring system. The post-cyclization tailoring enzymes adrF, adrE, adrJ, and adrA, are involved in the conversion of andrastin E into andrastin A. The short chain dehydrogenase adrF is responsible for the oxidation of the C-3 a hydroxyl group of andrastin E to yield the corresponding ketone, andrastin D. The ketoreductase adrE stereoselectively reduces the carbonyl moiety to reverse the stereochemistry of the C-3 position to yield andrastin F. The acetyltransferase adrJ is the acetyltransferase that attaches the acetyl group to the C-3 hydroxyl group of andrastin F to yield andrastin C. Finally, the cytochrome P450 monooxygenase adrA catalyzes two sequential oxidation reactions of the C-23 methyl group, to generate the corresponding alcohol andrastin B, and aldehyde andrastin A. This is Andrastin A biosynthesis cluster protein B from Penicillium rubens (strain ATCC 28089 / DSM 1075 / NRRL 1951 / Wisconsin 54-1255) (Penicillium chrysogenum).